The chain runs to 342 residues: Platelet-activating factor receptor (342 aa).

The Extracellular portion of the chain corresponds to 1-16 (MEPHDSSHMDSEFRYT). Residues 17-38 (LFPIVYSIIFVLGVIANGYVLW) traverse the membrane as a helical segment. Topologically, residues 39–54 (VFARLYPCKKFNEIKI) are cytoplasmic. Residues 55 to 74 (FMVNLTMADMLFLITLPLWI) form a helical membrane-spanning segment. At 75–91 (VYYQNQGNWILPKFLCN) the chain is on the extracellular side. A disulfide bond links Cys90 and Cys173. A helical membrane pass occupies residues 92-113 (VAGCLFFINTYCSVAFLGVITY). Residues 114–133 (NRFQAVTRPIKTAQANTRKR) lie on the Cytoplasmic side of the membrane. Residues 134–155 (GISLSLVIWVAIVGAASYFLIL) traverse the membrane as a helical segment. Topologically, residues 156–184 (DSTNTVPDSAGSGNVTRCFEHYEKGSVPV) are extracellular. Residue Asn169 is glycosylated (N-linked (GlcNAc...) asparagine). A helical membrane pass occupies residues 185–205 (LIIHIFIVFSFFLVFLIILFC). Residues 206-233 (NLVIIRTLLMQPVQQQRNAEVKRRALWM) lie on the Cytoplasmic side of the membrane. Residues 234–254 (VCTVLAVFIICFVPHHVVQLP) traverse the membrane as a helical segment. The Extracellular portion of the chain corresponds to 255 to 276 (WTLAELGFQDSKFHQAINDAHQ). Residues 277–296 (VTLCLLSTNCVLDPVIYCFL) form a helical membrane-spanning segment. The Cytoplasmic portion of the chain corresponds to 297-342 (TKKFRKHLTEKFYSMRSSRKCSRATTDTVTEVVVPFNQIPGNSLKN).

This sequence belongs to the G-protein coupled receptor 1 family. Interacts with ARRB1. Expressed in the placenta, lung, left and right heart ventricles, heart atrium, leukocytes and differentiated HL-60 granulocytes.

Its subcellular location is the cell membrane. Functionally, receptor for platelet activating factor, a chemotactic phospholipid mediator that possesses potent inflammatory, smooth-muscle contractile and hypotensive activity. Seems to mediate its action via a G protein that activates a phosphatidylinositol-calcium second messenger system. This Homo sapiens (Human) protein is Platelet-activating factor receptor (PTAFR).